Consider the following 111-residue polypeptide: Nucleoid-associated protein Fphi_0115 (111 aa).

A disordered region spans residues 1–27 (MNFDMSKLMQQAQKMQEQMKKAQQERE). Basic and acidic residues predominate over residues 17-27 (EQMKKAQQERE).

This sequence belongs to the YbaB/EbfC family. Homodimer.

Its subcellular location is the cytoplasm. It localises to the nucleoid. Binds to DNA and alters its conformation. May be involved in regulation of gene expression, nucleoid organization and DNA protection. This Francisella philomiragia subsp. philomiragia (strain ATCC 25017 / CCUG 19701 / FSC 153 / O#319-036) protein is Nucleoid-associated protein Fphi_0115.